Here is a 944-residue protein sequence, read N- to C-terminus: MSDYKHTLNLPETAFPMRGNLAQREPKMLEQWYETDLYGQIRKAKAGKPKFILHDGPPYANGQIHIGHAVNKILKDVIVKAKTLSDFDAPYVPGWDCHGLPIELQVEKKHGKPGKKLNLAEFREKCREYAMTQIDQQRTDFKRLGVLGDWDNPYLTMNFKQEADSVRALAKIIDNGHMHQGFKPVHWCTDCGSALAEAEVEYQDKNSPAIDVRMPVAATAETVDRFSTPEGHVGEGNVSMVIWTTTPWTIPANRAVTLAEGLEYTLVQVEASDDQPAERVILADDLVNDCMERWNITHYHKLGFCKGKDLEGLQLQHPLFELQVPVILGDHVTTESGTGCVHTAPGHGVDDFLVGQKYGIEVYNPVGDNGVYKDDTPLFAGQHVFKANEPIVDKLREVGNLMHAESYRHSYPHCWRHKTPIIFRATPQWFISMDKKGLRAGALEQIKKVDWFPEWGQSRIESMVEGRPDWCISRQRTWGNPIAIFVNRETEELHPNTLELMEKVAQLIEKDGVQAWFDLEPETLLGDEADKYRKVTDTLDVWFDSGVTHHCVLREFDGLRWPADLYLEGSDQHRGWFQSSLVTGVAMYDEAPYHQVLTHGFTVDAQGRKMSKSIGNVVAPQDVMNKLGGDILRLWVASADYSGEMTVSDEILKRSADAYRRIRNTSRFLLANLSGFDPKQDLVAKEDMVELDRWIVGRAADLQNELLEAYNNYQFHSVVQKLMHFCSIELGSFYLDIIKDRQYTAKSEGLARRSCQTALYHIAEALVRWMAPICSFTAQEIWDLLPNERSQYVFTESWYQGFDEFSGVKDAENEFWMQLLEIRDVVNQALEQSRRDDVIGGSLQAEVTLYADDELAAALNRLGEELRFALLTSEAQVASINDAPADAVKAEKMALAVSVTKSEYKKCERCWHHREEVGTLENHSDLCQRCVTNIEGEGEERRFA.

Positions 58–68 (PYANGQIHIGH) match the 'HIGH' region motif. L-isoleucyl-5'-AMP is bound at residue Glu-568. The 'KMSKS' region signature appears at 609-613 (KMSKS). ATP is bound at residue Lys-612. Residues Cys-907, Cys-910, Cys-927, and Cys-930 each coordinate Zn(2+).

The protein belongs to the class-I aminoacyl-tRNA synthetase family. IleS type 1 subfamily. Monomer. The cofactor is Zn(2+).

The protein localises to the cytoplasm. The catalysed reaction is tRNA(Ile) + L-isoleucine + ATP = L-isoleucyl-tRNA(Ile) + AMP + diphosphate. In terms of biological role, catalyzes the attachment of isoleucine to tRNA(Ile). As IleRS can inadvertently accommodate and process structurally similar amino acids such as valine, to avoid such errors it has two additional distinct tRNA(Ile)-dependent editing activities. One activity is designated as 'pretransfer' editing and involves the hydrolysis of activated Val-AMP. The other activity is designated 'posttransfer' editing and involves deacylation of mischarged Val-tRNA(Ile). The protein is Isoleucine--tRNA ligase of Idiomarina loihiensis (strain ATCC BAA-735 / DSM 15497 / L2-TR).